Reading from the N-terminus, the 228-residue chain is Cytidylate kinase (228 aa).

17-25 (GPTASGKGT) contacts ATP.

The protein belongs to the cytidylate kinase family. Type 1 subfamily.

It is found in the cytoplasm. The enzyme catalyses CMP + ATP = CDP + ADP. The catalysed reaction is dCMP + ATP = dCDP + ADP. The polypeptide is Cytidylate kinase (Burkholderia mallei (strain NCTC 10247)).